Reading from the N-terminus, the 363-residue chain is Chorismate synthase (363 aa).

Residues Arg-48 and Arg-54 each coordinate NADP(+). FMN is bound by residues 125–127, 237–238, Gly-277, 292–296, and Arg-318; these read RSS, NA, and KPTSS.

The protein belongs to the chorismate synthase family. As to quaternary structure, homotetramer. FMNH2 is required as a cofactor.

It catalyses the reaction 5-O-(1-carboxyvinyl)-3-phosphoshikimate = chorismate + phosphate. The protein operates within metabolic intermediate biosynthesis; chorismate biosynthesis; chorismate from D-erythrose 4-phosphate and phosphoenolpyruvate: step 7/7. Functionally, catalyzes the anti-1,4-elimination of the C-3 phosphate and the C-6 proR hydrogen from 5-enolpyruvylshikimate-3-phosphate (EPSP) to yield chorismate, which is the branch point compound that serves as the starting substrate for the three terminal pathways of aromatic amino acid biosynthesis. This reaction introduces a second double bond into the aromatic ring system. This chain is Chorismate synthase, found in Pseudomonas savastanoi pv. phaseolicola (strain 1448A / Race 6) (Pseudomonas syringae pv. phaseolicola (strain 1448A / Race 6)).